Here is a 323-residue protein sequence, read N- to C-terminus: Melanocortin receptor 3 (323 aa).

Over 1-37 (MNASCCLPSVQPTLPNGSEHLQAPFFSNQSSSAFCEQ) the chain is Extracellular. N2, N16, and N28 each carry an N-linked (GlcNAc...) asparagine glycan. The helical transmembrane segment at 38–63 (VFIKPEVFLSLGIVSLLENILVILAV) threads the bilayer. The Cytoplasmic portion of the chain corresponds to 64-75 (VRNGNLHSPMYF). A helical transmembrane segment spans residues 76 to 100 (FLCSLAVADMLVSVSNALETIMIAI). At 101-118 (VHSDYLTFEDQFIQHMDN) the chain is on the extracellular side. A helical membrane pass occupies residues 119–140 (IFDSMICISLVASICNLLAIAV). The Cytoplasmic segment spans residues 141-160 (DRYVTIFYALRYHSIMTVRK). The helical transmembrane segment at 161–181 (ALTLIVAIWVCCGVCGVVFIV) threads the bilayer. Over 182–186 (YSESK) the chain is Extracellular. Residues 187 to 210 (MVIVCLITMFFAMMLLMGTLYVHM) form a helical membrane-spanning segment. The Cytoplasmic portion of the chain corresponds to 211–245 (FLFARLHVKRIAALPPADGVAPQQHSCMKGAVTIT). A helical membrane pass occupies residues 246–268 (ILLGVFIFCWAPFFLHLVLIITC). The Extracellular segment spans residues 269–277 (PTNPYCICY). The helical transmembrane segment at 278–301 (TAHFNTYLVLIMCNSVIDPLIYAF) threads the bilayer. Over 302 to 323 (RSLELRNTFREILCGCNGMNLG) the chain is Cytoplasmic. C315 carries the S-palmitoyl cysteine lipid modification.

Belongs to the G-protein coupled receptor 1 family. Brain, placental, and gut tissues.

It is found in the cell membrane. Its function is as follows. Receptor for MSH (alpha, beta and gamma) and ACTH. This receptor is mediated by G proteins which activate adenylate cyclase. Required for expression of anticipatory patterns of activity and wakefulness during periods of limited nutrient availability and for the normal regulation of circadian clock activity in the brain. This Homo sapiens (Human) protein is Melanocortin receptor 3 (MC3R).